A 222-amino-acid polypeptide reads, in one-letter code: Thymidylate kinase (222 aa).

7 to 14 (GIDGAGKS) provides a ligand contact to ATP.

Belongs to the thymidylate kinase family.

The enzyme catalyses dTMP + ATP = dTDP + ADP. Functionally, phosphorylation of dTMP to form dTDP in both de novo and salvage pathways of dTTP synthesis. The chain is Thymidylate kinase from Chlorobium chlorochromatii (strain CaD3).